The following is a 294-amino-acid chain: Mitochondrial HMG-box protein CIM1 (294 aa).

The transit peptide at 1–90 (MKATLLLKAQ…RLYYASFCQS (90 aa)) directs the protein to the mitochondrion. An HMG-box A region spans residues 27–102 (NRTPYTAFQY…IDILNVSKIE (76 aa)). An HMG-box B region spans residues 110-258 (PIPAMSEYLL…IQILQKNMDI (149 aa)).

The protein resides in the mitochondrion matrix. Its function is as follows. Mitochondrial HMG-box protein that limits the copy number of mitochondrial DNA (mtDNA), antagonizing HMG-box containing protein ABF2, a mtDNA packaging factor. The polypeptide is Mitochondrial HMG-box protein CIM1 (Saccharomyces cerevisiae (strain ATCC 204508 / S288c) (Baker's yeast)).